A 741-amino-acid polypeptide reads, in one-letter code: NAD(P)H-quinone oxidoreductase subunit 5, chloroplastic (741 aa).

A run of 15 helical transmembrane segments spans residues 9-29 (WIIP…LLLF), 40-60 (WAVP…ELAI), 89-109 (IDPL…LVLI), 125-145 (FSYL…SNLI), 147-167 (IYIF…FWFA), 185-205 (GDFG…SFEF), 219-239 (NGVN…GAVA), 258-278 (TPIS…FLVA), 280-300 (LLPL…IGVI), 327-347 (LGYI…FHLI), 396-416 (TTFF…CFWS), 425-445 (WLYS…TAFY), 547-567 (LLPL…GIPF), 606-626 (ILSV…YGSV), and 721-741 (SYIF…YFFI).

This sequence belongs to the complex I subunit 5 family. In terms of assembly, NDH is composed of at least 16 different subunits, 5 of which are encoded in the nucleus.

It is found in the plastid. The protein resides in the chloroplast thylakoid membrane. It catalyses the reaction a plastoquinone + NADH + (n+1) H(+)(in) = a plastoquinol + NAD(+) + n H(+)(out). The catalysed reaction is a plastoquinone + NADPH + (n+1) H(+)(in) = a plastoquinol + NADP(+) + n H(+)(out). In terms of biological role, NDH shuttles electrons from NAD(P)H:plastoquinone, via FMN and iron-sulfur (Fe-S) centers, to quinones in the photosynthetic chain and possibly in a chloroplast respiratory chain. The immediate electron acceptor for the enzyme in this species is believed to be plastoquinone. Couples the redox reaction to proton translocation, and thus conserves the redox energy in a proton gradient. In Ceratophyllum demersum (Rigid hornwort), this protein is NAD(P)H-quinone oxidoreductase subunit 5, chloroplastic (ndhF).